Here is a 505-residue protein sequence, read N- to C-terminus: Prenylcysteine oxidase 1 (505 aa).

Residues 1–28 form the signal peptide; the sequence is MGRFAAALVGSLFWLGLLLCGLGSLASA. N-linked (GlcNAc...) asparagine glycosylation is found at Asn-196, Asn-323, and Asn-353.

The protein belongs to the prenylcysteine oxidase family. FAD is required as a cofactor. In terms of tissue distribution, highly expressed in the liver, kidney, heart and brain.

It localises to the lysosome. The enzyme catalyses an S-polyprenyl-L-cysteine + O2 + H2O = a polyprenal + L-cysteine + H2O2. It carries out the reaction S-(2E,6E)-farnesyl-L-cysteine + O2 + H2O = (2E,6E)-farnesal + L-cysteine + H2O2. It catalyses the reaction [(2E,6E,10E)-geranylgeranyl]-L-cysteine + O2 + H2O = (2E,6E,10E)-geranylgeranial + L-cysteine + H2O2. Prenylcysteine oxidase that cleaves the thioether bond of prenyl-L-cysteines, such as farnesylcysteine and geranylgeranylcysteine. Only active against free prenylcysteines and not prenylcysteine residues within prenylated proteins or peptides. Involved in the final step in the degradation of prenylated proteins, by degrading prenylcysteines after the protein has been degraded. The protein is Prenylcysteine oxidase 1 of Mus musculus (Mouse).